The following is a 296-amino-acid chain: HTH-type transcriptional regulator IlvR (296 aa).

The 58-residue stretch at 1–58 (MDIRQFRHFAAVAETLHFGRAAERLGITQPPLSQSIQALEKALGAPLFARTKRHVELT) folds into the HTH lysR-type domain. Residues 18 to 37 (FGRAAERLGITQPPLSQSIQ) constitute a DNA-binding region (H-T-H motif).

The protein belongs to the LysR transcriptional regulatory family.

Its function is as follows. Positively regulates the expression of the ilvD gene while negatively autoregulating its own expression. The sequence is that of HTH-type transcriptional regulator IlvR (ilvR) from Caulobacter vibrioides (strain ATCC 19089 / CIP 103742 / CB 15) (Caulobacter crescentus).